The sequence spans 83 residues: Exodeoxyribonuclease 7 small subunit (83 aa).

The protein belongs to the XseB family. In terms of assembly, heterooligomer composed of large and small subunits.

It localises to the cytoplasm. It catalyses the reaction Exonucleolytic cleavage in either 5'- to 3'- or 3'- to 5'-direction to yield nucleoside 5'-phosphates.. Its function is as follows. Bidirectionally degrades single-stranded DNA into large acid-insoluble oligonucleotides, which are then degraded further into small acid-soluble oligonucleotides. In Rhizobium meliloti (strain 1021) (Ensifer meliloti), this protein is Exodeoxyribonuclease 7 small subunit.